Consider the following 410-residue polypeptide: Arginine deiminase (410 aa).

Catalysis depends on C400, which acts as the Amidino-cysteine intermediate.

This sequence belongs to the arginine deiminase family.

It localises to the cytoplasm. It carries out the reaction L-arginine + H2O = L-citrulline + NH4(+). It participates in amino-acid degradation; L-arginine degradation via ADI pathway; carbamoyl phosphate from L-arginine: step 1/2. This chain is Arginine deiminase, found in Bacillus cereus (strain ATCC 10987 / NRS 248).